A 420-amino-acid polypeptide reads, in one-letter code: Vacuolar amino acid transporter 5 (420 aa).

Residues 1–19 (MSGYSPLSSGPADVHIGKA) are Cytoplasmic-facing. Residues 20 to 40 (GFFSSVINLANTILGAGILSL) traverse the membrane as a helical segment. The Vacuolar segment spans residues 41 to 49 (PNAFTKTGL). A helical transmembrane segment spans residues 50 to 70 (LFGCLTIVFSAFASFLGLYFV). Residues 71–96 (SQCAARLPRGKASFAAVAKHTFPSLA) lie on the Cytoplasmic side of the membrane. Residues 97-117 (VVFDASIAVKCFGVAVSYLVI) traverse the membrane as a helical segment. The Vacuolar portion of the chain corresponds to 118 to 141 (VGDLMPQIAPSLGLSSPMFLRRQT). A helical transmembrane segment spans residues 142–162 (WIVFALFVLTPLSFLKRLDSL). Over 163–166 (RHTS) the chain is Cytoplasmic. The helical transmembrane segment at 167–187 (VISLIALCYLVFIVLYHFIIG) threads the bilayer. The Vacuolar portion of the chain corresponds to 188-195 (DTVKGEIR). Residues 196–216 (YFVPESGFGYLSVLPVFVFGF) traverse the membrane as a helical segment. Residues 217–240 (TCHQNAFSVINEVRNFSQGFVNFT) lie on the Cytoplasmic side of the membrane. The chain crosses the membrane as a helical span at residues 241-261 (MFTAIISSTLLYLLVAITGYL). The Vacuolar segment spans residues 262–278 (SFGSLASGNIIAMYDNT). The helical transmembrane segment at 279–299 (SIWIIGGKLAIVVLVLFSYPL) threads the bilayer. Topologically, residues 300-326 (QCHPCRNSVYQAIRRSYSAHDMSDGYH) are cytoplasmic. The helical transmembrane segment at 327–347 (AVITLCILLFTHSLALLLSSL) threads the bilayer. At 348 to 349 (EM) the chain is on the vacuolar side. The helical transmembrane segment at 350–370 (VLAFVGSTGSTFISFILPGSL) threads the bilayer. Topologically, residues 371 to 394 (YYFFSHKVASPGNSSPLQLRISRA) are cytoplasmic. A helical membrane pass occupies residues 395 to 415 (FAAGLAIYGTVVMILCLNINI). Topologically, residues 416–420 (AKLSH) are vacuolar.

Belongs to the amino acid/polyamine transporter 2 family.

It localises to the vacuole membrane. In terms of biological role, vacuolar amino acid transporter involved in the vacuolar uptake of histidine, glutamate, tyrosine, arginine, lysine, and serine. Required for sporulation. This chain is Vacuolar amino acid transporter 5 (avt5), found in Schizosaccharomyces pombe (strain 972 / ATCC 24843) (Fission yeast).